Consider the following 623-residue polypeptide: Peptidoglycan D,D-transpeptidase MrdA (623 aa).

Residues 17–37 (VIVAFGVVVVCFGILIFNLYN) form a helical membrane-spanning segment. The active-site Acyl-ester intermediate is the Ser326.

This sequence belongs to the transpeptidase family. MrdA subfamily.

It localises to the cell inner membrane. It carries out the reaction Preferential cleavage: (Ac)2-L-Lys-D-Ala-|-D-Ala. Also transpeptidation of peptidyl-alanyl moieties that are N-acyl substituents of D-alanine.. The protein operates within cell wall biogenesis; peptidoglycan biosynthesis. Catalyzes cross-linking of the peptidoglycan cell wall. The chain is Peptidoglycan D,D-transpeptidase MrdA from Salmonella typhimurium (strain SL1344).